The sequence spans 129 residues: MNTIHLEIVTPEGLIFSNDAKMVVLPGSEGEFGVLPGHASLVSLLKIGVVDIENVDGTHDAVAIDWGYVKIDENKVIVLVDGAVYVAGNSESEIAQSIENAKTLVKRMSDGNGILATALARIENAARAR.

The protein belongs to the ATPase epsilon chain family. In terms of assembly, F-type ATPases have 2 components, CF(1) - the catalytic core - and CF(0) - the membrane proton channel. CF(1) has five subunits: alpha(3), beta(3), gamma(1), delta(1), epsilon(1). CF(0) has three main subunits: a, b and c.

The protein resides in the cell inner membrane. Functionally, produces ATP from ADP in the presence of a proton gradient across the membrane. The sequence is that of ATP synthase epsilon chain from Campylobacter fetus subsp. fetus (strain 82-40).